A 214-amino-acid chain; its full sequence is MSKSKEAAASSIILKYLNDQNRPYSTQDVFSNLQRDHGLGKTAVVKTMELLAQKGKIKEKVYGKQKIYFADQEQFPSVSDSELKDLDAQVTELSSKLQSSQQSCRQLESELKDLTSSLTTEEMLKEVSCLKEECDRHEHKLTNIKSATNHVTPAEKEKVYGERKHFCKEWKKRKRMATDIFDAILEGYPKSKKQFFEEVGVETDEDCNVTVPDV.

Residues 79–147 (SDSELKDLDA…EHKLTNIKSA (69 aa)) adopt a coiled-coil conformation. The tract at residues 115–179 (TSSLTTEEML…WKKRKRMATD (65 aa)) is DNA-binding.

Belongs to the HOP2 family.

The protein resides in the nucleus. Plays an important role in meiotic recombination. Stimulates DMC1-mediated strand exchange required for pairing of homologous chromosomes during meiosis. The chain is Homologous-pairing protein 2 homolog (psmc3ip) from Xenopus laevis (African clawed frog).